The sequence spans 346 residues: MATQGVLAKYRLPPLPTIGEIIKLFNLRAEKQLSQNFLLDLKLTDKIVRKAGNLQNAYVCEVGPGPGGITRSILNAGVEELLVVEKDTRFIPGLKMLNEASSGKVQIVHGDILTYRMDRAFPKHLKKPWDDDPPNVHIIGNLPFSVSTPLIIKWLEQLADRTGPFTYGRTQMTLTFQKEVAERLTASTSSKQRSRLSIMAQNLCNVKNCFTIPGRAFVPKPEVDVGVVHFTPFIQPKIEQPFKVVEKVVRSVFQFRRKYCHHGVSILFPEESRLKCTEQMLRLADVDPTLRPTELTMTHFKKLCNVYREMCDQNPNLFAYNFREELRMRKLQGKTTEEGEEDDLQR.

The transit peptide at 1-27 directs the protein to the mitochondrion; sequence MATQGVLAKYRLPPLPTIGEIIKLFNL. S-adenosyl-L-methionine contacts are provided by Asn-36, Leu-38, Gly-63, Glu-85, Lys-86, Asp-111, Ile-112, and Asn-141.

It belongs to the class I-like SAM-binding methyltransferase superfamily. rRNA adenine N(6)-methyltransferase family. KsgA subfamily.

The protein resides in the mitochondrion. The enzyme catalyses adenosine(N)/adenosine(N+1) in rRNA + 4 S-adenosyl-L-methionine = N(6)-dimethyladenosine(N)/N(6)-dimethyladenosine(N+1) in rRNA + 4 S-adenosyl-L-homocysteine + 4 H(+). Functionally, mitochondrial methyltransferase which uses S-adenosyl methionine to dimethylate two highly conserved adjacent adenosine residues (A1583 and A1584) within the loop of helix 45 at the 3-prime end of 12S rRNA, thereby regulating the assembly or stability of the small subunit of the mitochondrial ribosome. Also required for basal transcription of mitochondrial DNA, probably via its interaction with POLRMT and TFAM. Stimulates transcription independently of the methyltransferase activity. The chain is Dimethyladenosine transferase 1, mitochondrial (tfb1m) from Xenopus tropicalis (Western clawed frog).